The following is a 151-amino-acid chain: UPF0178 protein Hhal_1913 (151 aa).

The protein belongs to the UPF0178 family.

In Halorhodospira halophila (strain DSM 244 / SL1) (Ectothiorhodospira halophila (strain DSM 244 / SL1)), this protein is UPF0178 protein Hhal_1913.